The sequence spans 114 residues: T cell receptor beta variable 5-4 (114 aa).

The signal sequence occupies residues 1 to 21 (MGPGLLCWALLCLLGAGSVET). Residues 22-114 (GVTQSPTHLI…SALYLCASSL (93 aa)) form the Ig-like domain. An intrachain disulfide couples cysteine 42 to cysteine 110. A glycan (N-linked (GlcNAc...) asparagine) is linked at asparagine 90.

Alpha-beta TR is a heterodimer composed of an alpha and beta chain; disulfide-linked. The alpha-beta TR is associated with the transmembrane signaling CD3 coreceptor proteins to form the TR-CD3 (TcR or TCR). The assembly of alpha-beta TR heterodimers with CD3 occurs in the endoplasmic reticulum where a single alpha-beta TR heterodimer associates with one CD3D-CD3E heterodimer, one CD3G-CD3E heterodimer and one CD247 homodimer forming a stable octameric structure. CD3D-CD3E and CD3G-CD3E heterodimers preferentially associate with TR alpha and TR beta chains, respectively. The association of the CD247 homodimer is the last step of TcR assembly in the endoplasmic reticulum and is required for transport to the cell surface.

The protein localises to the cell membrane. In terms of biological role, v region of the variable domain of T cell receptor (TR) beta chain that participates in the antigen recognition. Alpha-beta T cell receptors are antigen specific receptors which are essential to the immune response and are present on the cell surface of T lymphocytes. Recognize peptide-major histocompatibility (MH) (pMH) complexes that are displayed by antigen presenting cells (APC), a prerequisite for efficient T cell adaptive immunity against pathogens. Binding of alpha-beta TR to pMH complex initiates TR-CD3 clustering on the cell surface and intracellular activation of LCK that phosphorylates the ITAM motifs of CD3G, CD3D, CD3E and CD247 enabling the recruitment of ZAP70. In turn ZAP70 phosphorylates LAT, which recruits numerous signaling molecules to form the LAT signalosome. The LAT signalosome propagates signal branching to three major signaling pathways, the calcium, the mitogen-activated protein kinase (MAPK) kinase and the nuclear factor NF-kappa-B (NF-kB) pathways, leading to the mobilization of transcription factors that are critical for gene expression and essential for T cell growth and differentiation. The T cell repertoire is generated in the thymus, by V-(D)-J rearrangement. This repertoire is then shaped by intrathymic selection events to generate a peripheral T cell pool of self-MH restricted, non-autoaggressive T cells. Post-thymic interaction of alpha-beta TR with the pMH complexes shapes TR structural and functional avidity. This chain is T cell receptor beta variable 5-4, found in Homo sapiens (Human).